The sequence spans 324 residues: Olfactory receptor 52N5 (324 aa).

Residues methionine 1–valine 33 are Extracellular-facing. A helical transmembrane segment spans residues tryptophan 34–valine 54. Over tyrosine 55 to serine 62 the chain is Cytoplasmic. A helical membrane pass occupies residues leucine 63–threonine 84. Over threonine 85–alanine 108 the chain is Extracellular. A disulfide bridge connects residues cysteine 106 and cysteine 198. The helical transmembrane segment at glutamine 109–leucine 129 threads the bilayer. Residues aspartate 130–proline 148 lie on the Cytoplasmic side of the membrane. A helical transmembrane segment spans residues isoleucine 149–proline 169. The Extracellular portion of the chain corresponds to phenylalanine 170–valine 205. Residues isoleucine 206–serine 226 traverse the membrane as a helical segment. Topologically, residues tyrosine 227–alanine 246 are cytoplasmic. The helical transmembrane segment at phenylalanine 247 to threonine 267 threads the bilayer. The Extracellular portion of the chain corresponds to phenylalanine 268–histidine 283. Residues isoleucine 284–valine 304 form a helical membrane-spanning segment. At lysine 305 to glycine 324 the chain is on the cytoplasmic side.

This sequence belongs to the G-protein coupled receptor 1 family.

It localises to the cell membrane. Odorant receptor. This chain is Olfactory receptor 52N5 (OR52N5), found in Homo sapiens (Human).